Here is a 760-residue protein sequence, read N- to C-terminus: Colleterpenol synthase (760 aa).

Positions 14-335 are terpene cyclase; it reads ASSGLRSKFR…YTRRYPSKAD (322 aa). Aspartate 95 lines the Mg(2+) pocket. The DDXXD 1 signature appears at 95 to 99; sequence DDYYD. The NSE/DTE signature appears at 233–241; that stretch reads NDLYSWPKE. The prenyltransferase stretch occupies residues 336-759; sequence LRQPEVEFVD…LELVLRRLWI (424 aa). Residues 359 to 400 are disordered; it reads EEKVVSESVESLPTTEVEDEFSSSDASPGSVDQAISTPPSTT. Positions 391 to 400 are enriched in polar residues; it reads QAISTPPSTT. Isopentenyl diphosphate contacts are provided by lysine 477, arginine 480, and histidine 509. Mg(2+) is bound by residues aspartate 516 and aspartate 520. A DDXXD 2 motif is present at residues 516–520; the sequence is DDIED. Residue arginine 525 coordinates dimethylallyl diphosphate. An isopentenyl diphosphate-binding site is contributed by arginine 526. Lysine 605, threonine 606, glutamine 643, asparagine 650, lysine 660, and lysine 670 together coordinate dimethylallyl diphosphate.

The protein in the N-terminal section; belongs to the terpene synthase family. This sequence in the C-terminal section; belongs to the FPP/GGPP synthase family. In terms of assembly, hexamer. Mg(2+) is required as a cofactor.

The catalysed reaction is 5 isopentenyl diphosphate + dimethylallyl diphosphate = all-trans-hexaprenyl diphosphate + 5 diphosphate. It carries out the reaction all-trans-hexaprenyl diphosphate + H2O = colleterpenol + diphosphate. In terms of biological role, bifunctional terpene synthase that converts dimethylallyl diphosphate (DMAPP) and isopentenyl diphosphate (IPP) into colleterpenol as a single product. The C-terminal prenyltransferase (PT) domain of CgCS catalyzes formation of hexaprenyl diphosphate (HexPP), whereas the N-terminal terpene cyclase (TC) domain catalyzes the cyclization of HexPP to colleterpenol. This chain is Colleterpenol synthase, found in Colletotrichum gloeosporioides (Anthracnose fungus).